Reading from the N-terminus, the 305-residue chain is Putative F-box protein PP2-B8 (305 aa).

Residues 33–79 form the F-box domain; that stretch reads VAELDDLPEECVSIIVSFTSPQDACVLASVSKTFASAVKSDIVWEKF.

The sequence is that of Putative F-box protein PP2-B8 (PP2B8) from Arabidopsis thaliana (Mouse-ear cress).